Consider the following 225-residue polypeptide: 2-phytyl-1,4-naphtoquinone methyltransferase (225 aa).

Belongs to the class I-like SAM-binding methyltransferase superfamily. MenG/UbiE family.

The enzyme catalyses demethylphylloquinol + S-adenosyl-L-methionine = phylloquinol + S-adenosyl-L-homocysteine + H(+). Its pathway is cofactor biosynthesis; phylloquinone biosynthesis. Methyltransferase required for the conversion of 2-phytyl-1,4-beta-naphthoquinol to phylloquinol. This chain is 2-phytyl-1,4-naphtoquinone methyltransferase, found in Thermosynechococcus vestitus (strain NIES-2133 / IAM M-273 / BP-1).